The following is a 410-amino-acid chain: Histone-lysine N-methyltransferase SUV39H2 (410 aa).

The 59-residue stretch at tyrosine 47–lysine 105 folds into the Chromo domain. The Pre-SET domain occupies phenylalanine 189 to glycine 247. Zn(2+) is bound by residues cysteine 191, cysteine 193, cysteine 196, cysteine 201, cysteine 202, cysteine 229, cysteine 233, cysteine 235, and cysteine 239. The 124-residue stretch at tyrosine 250–glutamine 373 folds into the SET domain. Residues arginine 261 to tryptophan 263 and asparagine 330 to histidine 331 each bind S-adenosyl-L-methionine. Residue cysteine 333 participates in Zn(2+) binding. Residue tyrosine 372 coordinates S-adenosyl-L-methionine. Residues serine 381, serine 384, and serine 388 each carry the phosphoserine modification. Positions valine 394 to asparagine 410 constitute a Post-SET domain. Cysteine 398 contributes to the Zn(2+) binding site. Lysine 399 contributes to the S-adenosyl-L-methionine binding site. Residues cysteine 400 and cysteine 405 each contribute to the Zn(2+) site.

It belongs to the class V-like SAM-binding methyltransferase superfamily. Histone-lysine methyltransferase family. Suvar3-9 subfamily. In terms of assembly, interacts with SMAD5. The large PER complex involved in the histone methylation is composed of at least PER2, CBX3, TRIM28, SUV39H1 and/or SUV39H2; CBX3 mediates the formation of the complex. In terms of processing, ubiquitinated by the DCX(DCAF13) E3 ubiquitin ligase complex, leading to its degradation.

Its subcellular location is the nucleus. The protein resides in the chromosome. It is found in the centromere. It catalyses the reaction L-lysyl(9)-[histone H3] + 3 S-adenosyl-L-methionine = N(6),N(6),N(6)-trimethyl-L-lysyl(9)-[histone H3] + 3 S-adenosyl-L-homocysteine + 3 H(+). In terms of biological role, histone methyltransferase that specifically trimethylates 'Lys-9' of histone H3 using monomethylated H3 'Lys-9' as substrate. H3 'Lys-9' trimethylation represents a specific tag for epigenetic transcriptional repression by recruiting HP1 (CBX1, CBX3 and/or CBX5) proteins to methylated histones. Mainly functions in heterochromatin regions, thereby playing a central role in the establishment of constitutive heterochromatin at pericentric and telomere regions. H3 'Lys-9' trimethylation is also required to direct DNA methylation at pericentric repeats. SUV39H1 is targeted to histone H3 via its interaction with RB1 and is involved in many processes, such as cell cycle regulation, transcriptional repression and regulation of telomere length. May participate in regulation of higher-order chromatin organization during spermatogenesis. Recruited by the large PER complex to the E-box elements of the circadian target genes such as PER2 itself or PER1, contributes to the conversion of local chromatin to a heterochromatin-like repressive state through H3 'Lys-9' trimethylation. This chain is Histone-lysine N-methyltransferase SUV39H2 (SUV39H2), found in Homo sapiens (Human).